Here is a 372-residue protein sequence, read N- to C-terminus: Alanine dehydrogenase 2 (372 aa).

Residue H95 is part of the active site. Residue 169–199 participates in NAD(+) binding; that stretch reads KVTIIGGGQAGTNAAKIALGLGADVTILDVN.

The protein belongs to the AlaDH/PNT family.

It catalyses the reaction L-alanine + NAD(+) + H2O = pyruvate + NH4(+) + NADH + H(+). It functions in the pathway amino-acid degradation; L-alanine degradation via dehydrogenase pathway; NH(3) and pyruvate from L-alanine: step 1/1. In terms of biological role, may play a role in cell wall synthesis as L-alanine is an important constituent of the peptidoglycan layer. The protein is Alanine dehydrogenase 2 (ald2) of Staphylococcus aureus (strain MRSA252).